Consider the following 232-residue polypeptide: Protein fmp52-1, mitochondrial (232 aa).

The transit peptide at 1–36 (MASVALIGCTGMVGSHILTSLLAHPSVARVDTISRR) directs the protein to the mitochondrion.

It belongs to the FMP52 family.

It localises to the mitochondrion outer membrane. The chain is Protein fmp52-1, mitochondrial (fmp521) from Aspergillus terreus (strain NIH 2624 / FGSC A1156).